The primary structure comprises 233 residues: Phosphatidylserine decarboxylase proenzyme (233 aa).

Ser-190 acts as the Schiff-base intermediate with substrate; via pyruvic acid in catalysis. A Pyruvic acid (Ser); by autocatalysis modification is found at Ser-190.

The protein belongs to the phosphatidylserine decarboxylase family. PSD-A subfamily. In terms of assembly, heterodimer of a large membrane-associated beta subunit and a small pyruvoyl-containing alpha subunit. Pyruvate serves as cofactor. Is synthesized initially as an inactive proenzyme. Formation of the active enzyme involves a self-maturation process in which the active site pyruvoyl group is generated from an internal serine residue via an autocatalytic post-translational modification. Two non-identical subunits are generated from the proenzyme in this reaction, and the pyruvate is formed at the N-terminus of the alpha chain, which is derived from the carboxyl end of the proenzyme. The post-translation cleavage follows an unusual pathway, termed non-hydrolytic serinolysis, in which the side chain hydroxyl group of the serine supplies its oxygen atom to form the C-terminus of the beta chain, while the remainder of the serine residue undergoes an oxidative deamination to produce ammonia and the pyruvoyl prosthetic group on the alpha chain.

Its subcellular location is the cell membrane. The enzyme catalyses a 1,2-diacyl-sn-glycero-3-phospho-L-serine + H(+) = a 1,2-diacyl-sn-glycero-3-phosphoethanolamine + CO2. It participates in phospholipid metabolism; phosphatidylethanolamine biosynthesis; phosphatidylethanolamine from CDP-diacylglycerol: step 2/2. Functionally, catalyzes the formation of phosphatidylethanolamine (PtdEtn) from phosphatidylserine (PtdSer). The polypeptide is Phosphatidylserine decarboxylase proenzyme (Xanthobacter autotrophicus (strain ATCC BAA-1158 / Py2)).